A 474-amino-acid chain; its full sequence is Ribulose bisphosphate carboxylase large chain (474 aa).

Substrate is bound by residues Asn122 and Thr172. Residue Lys174 is the Proton acceptor of the active site. Residue Lys176 coordinates substrate. Mg(2+) contacts are provided by Lys200, Asp202, and Glu203. Lys200 carries the N6-carboxylysine modification. Residue His293 is the Proton acceptor of the active site. Substrate is bound by residues Arg294, His326, and Ser378.

The protein belongs to the RuBisCO large chain family. Type I subfamily. As to quaternary structure, heterohexadecamer of 8 large chains and 8 small chains; disulfide-linked. The disulfide link is formed within the large subunit homodimers. The cofactor is Mg(2+). Post-translationally, the disulfide bond which can form in the large chain dimeric partners within the hexadecamer appears to be associated with oxidative stress and protein turnover.

The protein localises to the carboxysome. The enzyme catalyses 2 (2R)-3-phosphoglycerate + 2 H(+) = D-ribulose 1,5-bisphosphate + CO2 + H2O. The catalysed reaction is D-ribulose 1,5-bisphosphate + O2 = 2-phosphoglycolate + (2R)-3-phosphoglycerate + 2 H(+). In terms of biological role, ruBisCO catalyzes two reactions: the carboxylation of D-ribulose 1,5-bisphosphate, the primary event in carbon dioxide fixation, as well as the oxidative fragmentation of the pentose substrate in the photorespiration process. Both reactions occur simultaneously and in competition at the same active site. The protein is Ribulose bisphosphate carboxylase large chain of Synechococcus sp. (strain JA-2-3B'a(2-13)) (Cyanobacteria bacterium Yellowstone B-Prime).